The chain runs to 490 residues: Limb region 1 protein homolog (490 aa).

Residues Met1–Arg19 are Extracellular-facing. The helical transmembrane segment at Glu20–Thr40 threads the bilayer. Over Arg41–Phe62 the chain is Cytoplasmic. The helical transmembrane segment at Leu63–Ile83 threads the bilayer. At Ser84–Asn110 the chain is on the extracellular side. The helical transmembrane segment at Leu111–Leu131 threads the bilayer. The Cytoplasmic segment spans residues Glu132–Leu151. A helical membrane pass occupies residues Val152–Ile172. Over Asp173–Glu187 the chain is Extracellular. The helical transmembrane segment at Phe188–Cys208 threads the bilayer. Residues Thr209 to Asn291 lie on the Cytoplasmic side of the membrane. Positions Arg250–Ala287 form a coiled coil. A helical transmembrane segment spans residues Leu292–Val312. Residues Ala313–Ser339 lie on the Extracellular side of the membrane. The chain crosses the membrane as a helical span at residues Leu340–Val360. At Ser361–Thr383 the chain is on the cytoplasmic side. A helical transmembrane segment spans residues Met384–Met404. The Extracellular segment spans residues Ser405–Gly426. A helical transmembrane segment spans residues Asn427 to Val447. The Cytoplasmic portion of the chain corresponds to Arg448–Leu490.

It belongs to the LIMR family. As to expression, widely expressed with strongest expression in heart and pancreas.

The protein localises to the membrane. In terms of biological role, putative membrane receptor. This chain is Limb region 1 protein homolog (LMBR1), found in Homo sapiens (Human).